The chain runs to 326 residues: Fos-related antigen 2 (326 aa).

The residue at position 1 (methionine 1) is an N-acetylmethionine. Positions 1–39 are disordered; the sequence is MYQDYPGNFDTSSRGSSGSPAHAESYSSGGGGQQKFRVD. The span at 9 to 19 shows a compositional bias: polar residues; the sequence is FDTSSRGSSGS. Residue lysine 35 forms a Glycyl lysine isopeptide (Lys-Gly) (interchain with G-Cter in SUMO2) linkage. At lysine 104 the chain carries N6-acetyllysine; alternate. Lysine 104 participates in a covalent cross-link: Glycyl lysine isopeptide (Lys-Gly) (interchain with G-Cter in SUMO2); alternate. 3 disordered regions span residues 111 to 131, 193 to 244, and 289 to 326; these read GRRR…RIRR, ISPE…QRSV, and EQES…LLAL. Position 120 is a phosphoserine (serine 120). Residues 124-187 form the bZIP domain; sequence EEKRRIRRER…EKLEFMLVAH (64 aa). A basic motif region spans residues 126–128; the sequence is KRR. Residues 129-136 are leucine-zipper; sequence IRRERNKL. Serine 200 is subject to Phosphoserine. The segment covering 201–211 has biased composition (polar residues); that stretch reads PPTSGLQSLRG. Lysine 222 participates in a covalent cross-link: Glycyl lysine isopeptide (Lys-Gly) (interchain with G-Cter in SUMO2); alternate. Residue lysine 222 forms a Glycyl lysine isopeptide (Lys-Gly) (interchain with G-Cter in SUMO1); alternate linkage. The residue at position 230 (serine 230) is a Phosphoserine. Residue lysine 239 forms a Glycyl lysine isopeptide (Lys-Gly) (interchain with G-Cter in SUMO2) linkage. A phosphoserine mark is found at serine 308 and serine 320. Positions 308–320 are enriched in low complexity; sequence SSSGDQSSDSLNS.

This sequence belongs to the bZIP family. Fos subfamily. As to quaternary structure, heterodimer. Interacts with the BAF multiprotein chromatin-remodeling complex subunits SMARCB1 and SMARCD1. Interacts with ARID1A and JUN. In terms of tissue distribution, expressed in the brain cortex. Expressed at night in pineal gland (at protein level). Also expressed in osteoblasts (at protein level).

It is found in the nucleus. Controls osteoclast survival and size. As a dimer with JUN, activates LIF transcription. Activates CEBPB transcription in PGE2-activated osteoblasts. In Rattus norvegicus (Rat), this protein is Fos-related antigen 2 (Fosl2).